Reading from the N-terminus, the 584-residue chain is Ras-specific guanine nucleotide-releasing factor RalGPS1 (584 aa).

The segment covering 1 to 13 (MDLMNGQSSSVNI) has biased composition (polar residues). 3 disordered regions span residues 1–29 (MDLM…SLSD), 285–338 (IEPG…IPHG), and 380–407 (HVPS…SELS). Positions 14–26 (AATASEKSSSSES) are enriched in low complexity. Positions 50 to 288 (TPEEYAGQIT…YKLSLKIEPG (239 aa)) constitute a Ras-GEF domain. A PXXP motif is present at residues 326–329 (PTPP). Positions 388–404 (ESSTLSSGISIGSSDGS) are enriched in low complexity. A PH domain is found at 458 to 570 (AVTIQGVLRR…WFKHLSAACQ (113 aa)).

It is found in the cytoplasm. The protein resides in the cell membrane. Its function is as follows. Guanine nucleotide exchange factor. May be involved in cytoskeletal organization. The chain is Ras-specific guanine nucleotide-releasing factor RalGPS1 (RALGPS1) from Gallus gallus (Chicken).